The following is a 178-amino-acid chain: UPF0232 protein cgR_0005 (178 aa).

A disordered region spans residues A16 to G55.

The protein belongs to the UPF0232 family.

In Corynebacterium glutamicum (strain R), this protein is UPF0232 protein cgR_0005.